A 111-amino-acid chain; its full sequence is uncharacterized protein (111 aa).

Residues 60 to 80 (TFGRFLAHISCLICILSKRIF) form a helical membrane-spanning segment.

It is found in the mitochondrion membrane. This is an uncharacterized protein from Arabidopsis thaliana (Mouse-ear cress).